We begin with the raw amino-acid sequence, 943 residues long: Isoleucine--tRNA ligase (943 aa).

Residues 59-69 (PYANGQIHLGH) carry the 'HIGH' region motif. Glu577 contributes to the L-isoleucyl-5'-AMP binding site. The 'KMSKS' region signature appears at 618-622 (KMSKS). Lys621 serves as a coordination point for ATP. Zn(2+)-binding residues include Cys906, Cys909, Cys926, and Cys929.

Belongs to the class-I aminoacyl-tRNA synthetase family. IleS type 1 subfamily. Monomer. Requires Zn(2+) as cofactor.

The protein localises to the cytoplasm. It carries out the reaction tRNA(Ile) + L-isoleucine + ATP = L-isoleucyl-tRNA(Ile) + AMP + diphosphate. In terms of biological role, catalyzes the attachment of isoleucine to tRNA(Ile). As IleRS can inadvertently accommodate and process structurally similar amino acids such as valine, to avoid such errors it has two additional distinct tRNA(Ile)-dependent editing activities. One activity is designated as 'pretransfer' editing and involves the hydrolysis of activated Val-AMP. The other activity is designated 'posttransfer' editing and involves deacylation of mischarged Val-tRNA(Ile). This chain is Isoleucine--tRNA ligase, found in Xanthomonas axonopodis pv. citri (strain 306).